Reading from the N-terminus, the 529-residue chain is Methionine--tRNA ligase (529 aa).

The 'HIGH' region motif lies at 12–22 (YYVNALPHIGS). Positions 127, 130, 145, and 148 each coordinate Zn(2+). The 'KMSKS' region motif lies at 301-305 (KMGKS). Lys-304 is an ATP binding site.

This sequence belongs to the class-I aminoacyl-tRNA synthetase family. MetG type 2A subfamily. In terms of assembly, monomer. Zn(2+) serves as cofactor.

It is found in the cytoplasm. The enzyme catalyses tRNA(Met) + L-methionine + ATP = L-methionyl-tRNA(Met) + AMP + diphosphate. In terms of biological role, is required not only for elongation of protein synthesis but also for the initiation of all mRNA translation through initiator tRNA(fMet) aminoacylation. The sequence is that of Methionine--tRNA ligase from Thermosynechococcus vestitus (strain NIES-2133 / IAM M-273 / BP-1).